The sequence spans 726 residues: PTS system glucose-specific EIICBA component (726 aa).

The 453-residue stretch at 1–453 (MMKDTFKNVL…FNYATPGRNG (453 aa)) folds into the PTS EIIC type-1 domain. 9 helical membrane passes run 18 to 38 (FGKA…MISI), 62 to 82 (IGWG…GGSW), 90 to 110 (AFAA…IFGV), 139 to 159 (VLEA…GFVG), 184 to 204 (FVPF…AAFW), 311 to 331 (FKVG…VAIY), 344 to 364 (GMMI…PIEY), 365 to 385 (MFMF…GAAF), and 419 to 439 (IVNF…IANF). In terms of domain architecture, PTS EIIB type-1 spans 473–555 (GSQAVNIINL…QDILDSGEII (83 aa)). The Phosphocysteine intermediate; for EIIB activity role is filled by Cys-495. One can recognise a PTS EIIA type-1 domain in the interval 596–700 (DPVFAQKMMG…ETSTVVVFTN (105 aa)). His-648 (tele-phosphohistidine intermediate; for EIIA activity) is an active-site residue.

It is found in the cell membrane. It catalyses the reaction N(pros)-phospho-L-histidyl-[protein] + D-glucose(out) = D-glucose 6-phosphate(in) + L-histidyl-[protein]. Functionally, the phosphoenolpyruvate-dependent sugar phosphotransferase system (sugar PTS), a major carbohydrate active transport system, catalyzes the phosphorylation of incoming sugar substrates concomitantly with their translocation across the cell membrane. This system is involved in glucose transport. This chain is PTS system glucose-specific EIICBA component (exp5), found in Streptococcus pneumoniae serotype 4 (strain ATCC BAA-334 / TIGR4).